Reading from the N-terminus, the 395-residue chain is Enoyl-[acyl-carrier-protein] reductase [NADH] (395 aa).

Residues 48 to 53 (GASTGY), 74 to 75 (FE), 111 to 112 (DA), and 139 to 140 (LA) contribute to the NAD(+) site. Tyr-225 serves as a coordination point for substrate. Tyr-235 serves as the catalytic Proton donor. NAD(+) contacts are provided by residues Lys-244 and 273 to 275 (LVT).

It belongs to the TER reductase family. As to quaternary structure, monomer.

It catalyses the reaction a 2,3-saturated acyl-[ACP] + NAD(+) = a (2E)-enoyl-[ACP] + NADH + H(+). It participates in lipid metabolism; fatty acid biosynthesis. Functionally, involved in the final reduction of the elongation cycle of fatty acid synthesis (FAS II). Catalyzes the reduction of a carbon-carbon double bond in an enoyl moiety that is covalently linked to an acyl carrier protein (ACP). The protein is Enoyl-[acyl-carrier-protein] reductase [NADH] of Saccharophagus degradans (strain 2-40 / ATCC 43961 / DSM 17024).